The chain runs to 114 residues: Prefoldin subunit 6 (114 aa).

Ser2 carries the N-acetylserine modification.

Belongs to the prefoldin subunit beta family. Heterohexamer of two PFD-alpha type and four PFD-beta type subunits.

The protein localises to the nucleus. In terms of biological role, binds specifically to cytosolic chaperonin (c-CPN) and transfers target proteins to it. Binds to nascent polypeptide chain and promotes folding in an environment in which there are many competing pathways for nonnative proteins. This is Prefoldin subunit 6 (YKE2) from Saccharomyces cerevisiae (strain ATCC 204508 / S288c) (Baker's yeast).